The chain runs to 148 residues: Large ribosomal subunit protein bL9 (148 aa).

This sequence belongs to the bacterial ribosomal protein bL9 family.

Binds to the 23S rRNA. The sequence is that of Large ribosomal subunit protein bL9 from Parafrankia sp. (strain EAN1pec).